The following is a 281-amino-acid chain: Nucleotide-binding protein DNO_0399 (281 aa).

6–13 (GMSGAGKS) lines the ATP pocket. 55 to 58 (DARN) contributes to the GTP binding site.

The protein belongs to the RapZ-like family.

In terms of biological role, displays ATPase and GTPase activities. This Dichelobacter nodosus (strain VCS1703A) protein is Nucleotide-binding protein DNO_0399.